Consider the following 428-residue polypeptide: Histone deacetylase 3 (428 aa).

The interval Asn3–Glu316 is histone deacetylase. 1D-myo-inositol 1,4,5,6-tetrakisphosphate-binding residues include His17, Gly21, and Lys25. His135 is an active-site residue. Zn(2+) is bound by residues Asp170, His172, and Asp259. Arg265 lines the 1D-myo-inositol 1,4,5,6-tetrakisphosphate pocket. A disordered region spans residues Pro381–Ile428. Composition is skewed to basic and acidic residues over residues Ser386–Ser405 and Asp415–Ile428.

The protein belongs to the histone deacetylase family. HD type 1 subfamily.

The protein resides in the nucleus. It is found in the chromosome. Its subcellular location is the cytoplasm. The protein localises to the cytosol. The enzyme catalyses N(6)-acetyl-L-lysyl-[histone] + H2O = L-lysyl-[histone] + acetate. It catalyses the reaction N(6)-acetyl-L-lysyl-[protein] + H2O = L-lysyl-[protein] + acetate. The catalysed reaction is N(6)-(2E)-butenoyl-L-lysyl-[protein] + H2O = (2E)-2-butenoate + L-lysyl-[protein]. It carries out the reaction N(6)-(2-hydroxyisobutanoyl)-L-lysyl-[protein] + H2O = 2-hydroxy-2-methylpropanoate + L-lysyl-[protein]. The enzyme catalyses N(6)-[(S)-lactoyl]-L-lysyl-[protein] + H2O = (S)-lactate + L-lysyl-[protein]. With respect to regulation, inositol tetraphosphate (1D-myo-inositol 1,4,5,6-tetrakisphosphate) promotes the histone deacetylase activity by acting as an intermolecular glue between hdac3 and N-Cor repressor complex components. In terms of biological role, histone deacetylase that catalyzes the deacetylation of lysine residues on the N-terminal part of the core histones (H2A, H2B, H3 and H4), and some other non-histone substrates. Histone deacetylation gives a tag for epigenetic repression and plays an important role in transcriptional regulation, cell cycle progression and developmental events. Histone deacetylases act via the formation of large multiprotein complexes, such as N-Cor repressor complex, which activate the histone deacetylase activity. Participates in the BCL6 transcriptional repressor activity by deacetylating the H3 'Lys-27' (H3K27) on enhancer elements, antagonizing EP300 acetyltransferase activity and repressing proximal gene expression. Also functions as a deacetylase for non-histone targets. In addition to protein deacetylase activity, also acts as a protein-lysine deacylase by recognizing other acyl groups: catalyzes removal of (2E)-butenoyl (crotonyl), lactoyl (lactyl) and 2-hydroxyisobutanoyl (2-hydroxyisobutyryl) acyl groups from lysine residues, leading to protein decrotonylation, delactylation and de-2-hydroxyisobutyrylation, respectively. In Danio rerio (Zebrafish), this protein is Histone deacetylase 3 (hdac3).